The primary structure comprises 351 residues: Large ribosomal subunit protein uL3 (351 aa).

Disordered stretches follow at residues 1-31 (MGHR…TPRT) and 246-271 (KGSR…GQLG).

It belongs to the universal ribosomal protein uL3 family. Part of the 50S ribosomal subunit. Forms a cluster with proteins L14 and L24e.

Its function is as follows. One of the primary rRNA binding proteins, it binds directly near the 3'-end of the 23S rRNA, where it nucleates assembly of the 50S subunit. The polypeptide is Large ribosomal subunit protein uL3 (Saccharolobus islandicus (strain M.14.25 / Kamchatka #1) (Sulfolobus islandicus)).